Consider the following 418-residue polypeptide: Glutamyl-tRNA reductase (418 aa).

Residues 49–52 (TCNR), Ser109, 114–116 (EPQ), and Gln120 each bind substrate. The active-site Nucleophile is the Cys50. 189–194 (GAGETI) contributes to the NADP(+) binding site.

It belongs to the glutamyl-tRNA reductase family. In terms of assembly, homodimer.

It carries out the reaction (S)-4-amino-5-oxopentanoate + tRNA(Glu) + NADP(+) = L-glutamyl-tRNA(Glu) + NADPH + H(+). Its pathway is porphyrin-containing compound metabolism; protoporphyrin-IX biosynthesis; 5-aminolevulinate from L-glutamyl-tRNA(Glu): step 1/2. In terms of biological role, catalyzes the NADPH-dependent reduction of glutamyl-tRNA(Glu) to glutamate 1-semialdehyde (GSA). This Shigella dysenteriae serotype 1 (strain Sd197) protein is Glutamyl-tRNA reductase.